We begin with the raw amino-acid sequence, 437 residues long: Succinyl-CoA:cyclohexane-1-carboxylate CoA transferase (437 aa).

221-225 (GWGGI) lines the CoA pocket. Glutamate 244 functions as the 5-glutamyl coenzyme A thioester intermediate in the catalytic mechanism. CoA-binding residues include leucine 319, glycine 342, and lysine 367.

Belongs to the acetyl-CoA hydrolase/transferase family. In terms of assembly, homodimer.

It carries out the reaction cyclohexane-1-carboxylate + succinyl-CoA = cyclohexane-1-carbonyl-CoA + succinate. The enzyme catalyses cyclohexane-1-carboxylate + butanoyl-CoA = cyclohexane-1-carbonyl-CoA + butanoate. Its function is as follows. Acyl-CoA transferase involved in the anaerobic degradation of cyclohexane carboxylic acid (CHC). Catalyzes the activation of CHC to cyclohexane-1-carbonyl-CoA (CHCoA). Benzoic acid and cyclohex-1-ene-1-carboxylic acid can also be used as substrates, but with lower specific activity. Shows highest activity with succinyl-CoA and butanoyl-coA as a CoA donor, and lower activity with crotonyl-CoA, acetyl-CoA, glutaryl-CoA, CH1eneCoA, propionyl-CoA and acetoacetyl-CoA. In vitro, the enzyme can use butanoyl-coA as a CoA donor with greater efficiency than succinyl-CoA. However, succinyl-CoA is the most abundant CoA ester in exponentially grown cells, whereas butanoyl-coA is hardly detectable, indicating that succinyl-CoA is the natural CoA donor for CHC activation. This is Succinyl-CoA:cyclohexane-1-carboxylate CoA transferase from Geobacter metallireducens (strain ATCC 53774 / DSM 7210 / GS-15).